Here is a 432-residue protein sequence, read N- to C-terminus: Adenosylhomocysteinase (432 aa).

An N-acetylserine modification is found at S2. Substrate contacts are provided by T57, D131, and E156. T157–T159 serves as a coordination point for NAD(+). At S183 the chain carries Phosphoserine. Substrate-binding residues include K186 and D190. Position 186 is an N6-(2-hydroxyisobutyryl)lysine (K186). The residue at position 193 (Y193) is a Phosphotyrosine. Residues G222–G227, E243, N248, I299–H301, N346, and H353 each bind NAD(+).

This sequence belongs to the adenosylhomocysteinase family. As to quaternary structure, homotetramer. Interaction with AHCYL1. The cofactor is NAD(+).

Its subcellular location is the cytoplasm. It localises to the melanosome. It is found in the nucleus. The protein resides in the endoplasmic reticulum. It carries out the reaction S-adenosyl-L-homocysteine + H2O = L-homocysteine + adenosine. The protein operates within amino-acid biosynthesis; L-homocysteine biosynthesis; L-homocysteine from S-adenosyl-L-homocysteine: step 1/1. Catalyzes the hydrolysis of S-adenosyl-L-homocysteine to form adenosine and homocysteine. Binds copper ions. The chain is Adenosylhomocysteinase (AHCY) from Homo sapiens (Human).